The primary structure comprises 614 residues: DNA mismatch repair protein MutL (614 aa).

Belongs to the DNA mismatch repair MutL/HexB family.

Its function is as follows. This protein is involved in the repair of mismatches in DNA. It is required for dam-dependent methyl-directed DNA mismatch repair. May act as a 'molecular matchmaker', a protein that promotes the formation of a stable complex between two or more DNA-binding proteins in an ATP-dependent manner without itself being part of a final effector complex. The sequence is that of DNA mismatch repair protein MutL from Thermoanaerobacter pseudethanolicus (strain ATCC 33223 / 39E) (Clostridium thermohydrosulfuricum).